The following is a 29-amino-acid chain: Cyclotide psyleio D (29 aa).

Residues 1–29 constitute a cross-link (cyclopeptide (Gly-Asp)); the sequence is GLPVCGESCFGGTCNTPGCSCTWPVCTRD. 3 disulfides stabilise this stretch: C5/C19, C9/C21, and C14/C26.

In terms of processing, this is a cyclic peptide.

Its function is as follows. Probably participates in a plant defense mechanism. The sequence is that of Cyclotide psyleio D from Psychotria brachyceras.